A 616-amino-acid polypeptide reads, in one-letter code: Chaperone protein HtpG (616 aa).

The segment at 1–333 (MKKQFDTEVN…CQDLPLNVSR (333 aa)) is a; substrate-binding. The interval 334-542 (EILQQNKILS…SNDPTYQMQK (209 aa)) is b. The c stretch occupies residues 543–616 (IMLSMGQEVK…INEFLEKELL (74 aa)).

The protein belongs to the heat shock protein 90 family. In terms of assembly, homodimer.

Its subcellular location is the cytoplasm. Its function is as follows. Molecular chaperone. Has ATPase activity. The chain is Chaperone protein HtpG from Borrelia garinii subsp. bavariensis (strain ATCC BAA-2496 / DSM 23469 / PBi) (Borreliella bavariensis).